The sequence spans 111 residues: MSYAKAISKYIRISPRKARLAAGLIRGLSVSDASLQLTFSGLKGGRLLKKTLDSAVANAETQLDMRRENLKVVEVRVDAGPTLKRAKPKNRGGRHPIMKRTSHFTVIVSNL.

It belongs to the universal ribosomal protein uL22 family. In terms of assembly, part of the 50S ribosomal subunit.

Its function is as follows. This protein binds specifically to 23S rRNA; its binding is stimulated by other ribosomal proteins, e.g. L4, L17, and L20. It is important during the early stages of 50S assembly. It makes multiple contacts with different domains of the 23S rRNA in the assembled 50S subunit and ribosome. In terms of biological role, the globular domain of the protein is located near the polypeptide exit tunnel on the outside of the subunit, while an extended beta-hairpin is found that lines the wall of the exit tunnel in the center of the 70S ribosome. This is Large ribosomal subunit protein uL22 from Protochlamydia amoebophila (strain UWE25).